We begin with the raw amino-acid sequence, 683 residues long: Multidrug resistance protein MdtO (683 aa).

9 consecutive transmembrane segments (helical) span residues 43–63 (VILISMTFEIPFVALSLAVLF), 75–95 (FVAILFVVATVLEIGSLFLIY), 100–120 (GEPLIRLIIAGPILMGCMFLM), 125–145 (LGLVFFAVAIVAIYGQTFPAM), 158–178 (WCIVVGLYPTLLMTLIGVLWF), 402–422 (FGGAFCGAILALLFTLLVMPW), 426–446 (IVELLFVLAPIFLLGAWIATS), 457–477 (MVVTFALATLENVFGPVYDLV), and 483–503 (ALGIIIGTVVSAVIYTFVWPE).

It belongs to the MdtO family. Could be part of a tripartite efflux system composed of MdtN, MdtO and MdtP.

Its subcellular location is the cell inner membrane. Its function is as follows. Could be involved in resistance to puromycin, acriflavine and tetraphenylarsonium chloride. This is Multidrug resistance protein MdtO (mdtO) from Escherichia coli (strain K12).